A 601-amino-acid polypeptide reads, in one-letter code: Elongation factor 4 (601 aa).

A tr-type G domain is found at 6–188; sequence KNIRNFSIIA…QIIKKIPAPD (183 aa). Residues 18–23 and 135–138 each bind GTP; these read DHGKST and NKID.

This sequence belongs to the TRAFAC class translation factor GTPase superfamily. Classic translation factor GTPase family. LepA subfamily.

It localises to the cell membrane. The enzyme catalyses GTP + H2O = GDP + phosphate + H(+). In terms of biological role, required for accurate and efficient protein synthesis under certain stress conditions. May act as a fidelity factor of the translation reaction, by catalyzing a one-codon backward translocation of tRNAs on improperly translocated ribosomes. Back-translocation proceeds from a post-translocation (POST) complex to a pre-translocation (PRE) complex, thus giving elongation factor G a second chance to translocate the tRNAs correctly. Binds to ribosomes in a GTP-dependent manner. The protein is Elongation factor 4 of Buchnera aphidicola subsp. Schizaphis graminum (strain Sg).